The sequence spans 198 residues: Iron-sulfur flavoprotein MJ0731 (198 aa).

Residues Cys46, Cys49, Cys52, and Cys59 each coordinate [4Fe-4S] cluster.

Belongs to the SsuE family. Isf subfamily. In terms of assembly, homodimer. The cofactor is FMN. Requires [4Fe-4S] cluster as cofactor.

Functionally, redox-active protein probably involved in electron transport. This Methanocaldococcus jannaschii (strain ATCC 43067 / DSM 2661 / JAL-1 / JCM 10045 / NBRC 100440) (Methanococcus jannaschii) protein is Iron-sulfur flavoprotein MJ0731.